Reading from the N-terminus, the 176-residue chain is Peptide methionine sulfoxide reductase MsrA (176 aa).

Cys14 is an active-site residue.

This sequence belongs to the MsrA Met sulfoxide reductase family.

It carries out the reaction L-methionyl-[protein] + [thioredoxin]-disulfide + H2O = L-methionyl-(S)-S-oxide-[protein] + [thioredoxin]-dithiol. The enzyme catalyses [thioredoxin]-disulfide + L-methionine + H2O = L-methionine (S)-S-oxide + [thioredoxin]-dithiol. Its function is as follows. Has an important function as a repair enzyme for proteins that have been inactivated by oxidation. Catalyzes the reversible oxidation-reduction of methionine sulfoxide in proteins to methionine. The chain is Peptide methionine sulfoxide reductase MsrA from Halalkalibacterium halodurans (strain ATCC BAA-125 / DSM 18197 / FERM 7344 / JCM 9153 / C-125) (Bacillus halodurans).